Reading from the N-terminus, the 2448-residue chain is Cysteine repeat modular protein 1 (2448 aa).

A helical membrane pass occupies residues 9-29; sequence TSTNLLNIFALYFSAICFIYC. N48, N89, N248, N284, N461, N503, N542, N598, and N619 each carry an N-linked (GlcNAc...) asparagine glycan. 4 FU repeats span residues 431-481, 485-530, 535-566, and 567-611; these read KNTC…GYYF, FMQC…GFYI, NFKC…FYLS, and SNTC…GQFA. FU repeat units follow at residues 645–694, 698–727, 728–772, 775–813, 819–868, 904–947, 950–983, 984–1027, 1063–1109, and 1113–1144; these read NNQC…GYFP, TSVC…YYLQ, DSNC…GTFG, QNIC…ITNN, KGMC…YYLS, GRVC…GFPD, QNVC…LNPA, NNIC…RTYP, QGAC…NQYV, and QNRC…GFYL. Residues N761 and N812 are each glycosylated (N-linked (GlcNAc...) asparagine). N934 carries N-linked (GlcNAc...) asparagine glycosylation. N1002 is a glycosylation site (N-linked (GlcNAc...) asparagine). A glycan (N-linked (GlcNAc...) asparagine) is linked at N1146. The FU 15 repeat unit spans residues 1147-1193; it reads QTQCSICDISCLQCSGPGFDSCIQCAQGYYKLGDSVCVQSCPDGFFL. Residue N1194 is glycosylated (N-linked (GlcNAc...) asparagine). 5 FU repeats span residues 1197-1232, 1234-1279, 1281-1332, 1346-1394, and 1402-1436; these read NNQC…ISNQ, GIIC…GYRS, KGVC…GTFQ, SYYC…GFIL, and NQYC…GTVQ. Residues N1296, N1328, and N1365 are each glycosylated (N-linked (GlcNAc...) asparagine). N-linked (GlcNAc...) asparagine glycosylation is found at N1506, N1601, N1628, and N1670. One can recognise an EGF-like domain in the interval 1739–1773; that stretch reads SDISCSLNLCMNSGKCVPNSIFCSCPSAFTGPKCQ. Disulfide bonds link C1743-C1754, C1748-C1761, and C1763-C1772. N1800, N1849, N1877, N1942, N2117, N2155, and N2179 each carry an N-linked (GlcNAc...) asparagine glycan. The next 2 helical transmembrane spans lie at 2201–2221 and 2238–2258; these read LYIM…YSAI and IYFL…NQFV. N2260 is a glycosylation site (N-linked (GlcNAc...) asparagine). 4 consecutive transmembrane segments (helical) span residues 2267-2287, 2296-2316, 2352-2372, and 2386-2406; these read SLTI…ILPF, ILTS…TIGV, MIGL…IGLC, and AVFL…IIVG.

It localises to the membrane. Required for mucocyst secretion. The polypeptide is Cysteine repeat modular protein 1 (Tetrahymena thermophila (strain SB210)).